The following is a 2596-amino-acid chain: Protein unc-79 homolog (2596 aa).

Residues serine 754 and serine 758 each carry the phosphoserine modification. 6 disordered regions span residues 907 to 931 (GPEGEEEENPAAKHGENPGNRTVPS), 1539 to 1573 (SQRQNDHHGRSRQNSATRPDNTEIPKNPGTEGFQE), 1594 to 1632 (VDSPGKPAPREDLDLIDLSSDSTSGPEKHSILSTSDSDS), 1648 to 1679 (EEEEMMNQGNGGALGNNAASSPSIPSQPSVLS), 1695 to 1832 (KDFS…FKIQ), and 1863 to 1909 (LGEQ…KQIQ). The segment covering 1594 to 1606 (VDSPGKPAPREDL) has biased composition (basic and acidic residues). Positions 1662–1679 (GNNAASSPSIPSQPSVLS) are enriched in low complexity. A compositionally biased stretch (polar residues) spans 1704 to 1713 (NHQSASNEDS). Over residues 1726–1735 (ELSKSEELRE) the composition is skewed to basic and acidic residues. Polar residues predominate over residues 1897–1908 (ETSSHSSISKQI). Helical transmembrane passes span 2184–2204 (LLSFVIQNAVFTLAYLVELCG) and 2426–2446 (CVLHMCSLFHAFIFAQLWTVY).

Belongs to the unc-79 family. As to quaternary structure, NALCN complex consists of NALCN and auxiliary subunits, UNC79, UNC80 and NACL1. These auxiliary subunits are essential for the NALCN channel function. UNC80 bridges NALCN to UNC79. Interacts with NALCN. Interacts with UNC80.

It is found in the cell membrane. Its function is as follows. Auxiliary subunit of the NALCN sodium channel complex. The NALCN sodium channel complex is a voltage-gated ion channel responsible for the resting Na(+) permeability that controls neuronal excitability. Activated by neuropeptides substance P, neurotensin, and extracellular calcium that regulates neuronal excitability by controlling the sizes of NALCN-dependent sodium-leak current. This chain is Protein unc-79 homolog (Unc79), found in Mus musculus (Mouse).